A 738-amino-acid chain; its full sequence is Protein Aster-B (738 aa).

The disordered stretch occupies residues 1-81; the sequence is MKGFKLSCTA…SGGKNSKKSQ (81 aa). The segment covering 8–19 has biased composition (polar residues); that stretch reads CTASNSNRSTPA. A phosphoserine mark is found at serine 28 and serine 30. A compositionally biased stretch (basic and acidic residues) spans 41–51; sequence MVEKGSDHSSD. The span at 59–70 shows a compositional bias: low complexity; the sequence is QGVQRSCSSQSG. Residues 96–163 form the GRAM domain; it reads EDFRKLFKQL…KDICSMTKEK (68 aa). The tract at residues 254–299 is disordered; the sequence is EENEVNDSSSKSSIETKPDASPQLPKKSITNSTLTSTGSSEAPVSF. Residues 259 to 268 show a composition bias toward polar residues; that stretch reads NDSSSKSSIE. Serine 274 is modified (phosphoserine). Positions 281-295 are enriched in polar residues; the sequence is SITNSTLTSTGSSEA. One can recognise a VASt domain in the interval 372–543; it reads SGRQYVNEVF…ELTKTESTYL (172 aa). Tyrosine 389 carries the post-translational modification Phosphotyrosine. Residues serine 550 and serine 581 each carry the phosphoserine modification. Phosphothreonine occurs at positions 584, 585, and 587. The chain crosses the membrane as a helical span at residues 623-643; the sequence is LLLVISCVICFSLVLLVVLNM.

Highly expressed in the adrenal gland (at protein level) and brain. Also found in the kidney, testis and macrophages.

The protein localises to the endoplasmic reticulum membrane. Its subcellular location is the cell membrane. Functionally, cholesterol transporter that mediates non-vesicular transport of cholesterol from the plasma membrane (PM) to the endoplasmic reticulum (ER). Contains unique domains for binding cholesterol and the PM, thereby serving as a molecular bridge for the transfer of cholesterol from the PM to the ER. Plays a crucial role in cholesterol homeostasis in the adrenal gland and has the unique ability to localize to the PM based on the level of membrane cholesterol. In lipid-poor conditions localizes to the ER membrane and in response to excess cholesterol in the PM is recruited to the endoplasmic reticulum-plasma membrane contact sites (EPCS) which is mediated by the GRAM domain. At the EPCS, the sterol-binding VASt/ASTER domain binds to the cholesterol in the PM and facilitates its transfer from the PM to ER. This is Protein Aster-B (Gramd1b) from Mus musculus (Mouse).